A 224-amino-acid chain; its full sequence is Orotidine 5'-phosphate decarboxylase (224 aa).

Residues Asp-10, Lys-32, 59 to 68 (DLKLHDIPNT), Thr-115, Arg-175, Gln-184, Gly-204, and Arg-205 contribute to the substrate site. Residue Lys-61 is the Proton donor of the active site.

It belongs to the OMP decarboxylase family. Type 1 subfamily. As to quaternary structure, homodimer.

It carries out the reaction orotidine 5'-phosphate + H(+) = UMP + CO2. The protein operates within pyrimidine metabolism; UMP biosynthesis via de novo pathway; UMP from orotate: step 2/2. Functionally, catalyzes the decarboxylation of orotidine 5'-monophosphate (OMP) to uridine 5'-monophosphate (UMP). This is Orotidine 5'-phosphate decarboxylase from Novosphingobium aromaticivorans (strain ATCC 700278 / DSM 12444 / CCUG 56034 / CIP 105152 / NBRC 16084 / F199).